Consider the following 35-residue polypeptide: MEALVYTFLLISTLGIIFFAIFFREPPKVPTKGGK.

A helical membrane pass occupies residues 3-23 (ALVYTFLLISTLGIIFFAIFF).

This sequence belongs to the PsbT family. In terms of assembly, PSII is composed of 1 copy each of membrane proteins PsbA, PsbB, PsbC, PsbD, PsbE, PsbF, PsbH, PsbI, PsbJ, PsbK, PsbL, PsbM, PsbT, PsbY, PsbZ, Psb30/Ycf12, at least 3 peripheral proteins of the oxygen-evolving complex and a large number of cofactors. It forms dimeric complexes.

It localises to the plastid. It is found in the chloroplast thylakoid membrane. Functionally, found at the monomer-monomer interface of the photosystem II (PS II) dimer, plays a role in assembly and dimerization of PSII. PSII is a light-driven water plastoquinone oxidoreductase, using light energy to abstract electrons from H(2)O, generating a proton gradient subsequently used for ATP formation. This is Photosystem II reaction center protein T from Welwitschia mirabilis (Tree tumbo).